The following is a 476-amino-acid chain: ATP synthase subunit beta, chloroplastic (476 aa).

Residue 156 to 163 (GGAGVGKT) coordinates ATP.

This sequence belongs to the ATPase alpha/beta chains family. As to quaternary structure, F-type ATPases have 2 components, CF(1) - the catalytic core - and CF(0) - the membrane proton channel. CF(1) has five subunits: alpha(3), beta(3), gamma(1), delta(1), epsilon(1). CF(0) has four main subunits: a(1), b(1), b'(1) and c(9-12).

The protein resides in the plastid. Its subcellular location is the chloroplast thylakoid membrane. It catalyses the reaction ATP + H2O + 4 H(+)(in) = ADP + phosphate + 5 H(+)(out). Produces ATP from ADP in the presence of a proton gradient across the membrane. The catalytic sites are hosted primarily by the beta subunits. The sequence is that of ATP synthase subunit beta, chloroplastic from Fucus vesiculosus (Bladder wrack).